The following is a 519-amino-acid chain: Amphoterin-induced protein 2 (519 aa).

Positions 1–38 (MSLRFHTLPTLPRAVKPGCRELLCLLVIAVMVSPSASG) are cleaved as a signal peptide. Positions 39–67 (MCPTACICATDIVSCTNKNLSKVPGNLFR) constitute an LRRNT domain. The Extracellular portion of the chain corresponds to 39–397 (MCPTACICAT…RSHAHEAFNT (359 aa)). 2 disulfides stabilise this stretch: Cys-40–Cys-46 and Cys-44–Cys-53. N-linked (GlcNAc...) asparagine glycosylation is present at Asn-57. 6 LRR repeats span residues 68-89 (LIKR…WIPV), 93-114 (KLST…SFST), 117-138 (NLKC…TFQE), 141-162 (ALEV…AFGG), 165-186 (HLQK…LYTG), and 192-213 (DLTF…HINL). An N-linked (GlcNAc...) asparagine glycan is attached at Asn-103. In terms of domain architecture, LRRCT spans 227-283 (NPFVCDCSLYSLLIFWYRRHFSSVMDFKNDYTCRLWSDSRHSHQLQLLQESFLNCSY). 2 cysteine pairs are disulfide-bonded: Cys-231/Cys-259 and Cys-233/Cys-281. Residues Asn-280, Asn-287, Asn-344, Asn-372, Asn-380, Asn-383, and Asn-387 are each glycosylated (N-linked (GlcNAc...) asparagine). Positions 288–378 (GSFHALGFIH…RLLNETVDIM (91 aa)) constitute an Ig-like C2-type domain. Cys-309 and Cys-362 are joined by a disulfide. Residues 398-418 (AFTTLAACVASIVLVLLYLYL) form a helical membrane-spanning segment. At 419–519 (TPCPCKCKAK…FSDTPFVAST (101 aa)) the chain is on the cytoplasmic side. Residues 498-519 (RAKSDSDSVNSVFSDTPFVAST) form a disordered region.

It belongs to the immunoglobulin superfamily. AMIGO family. As to quaternary structure, binds itself as well as AMIGO1 and AMIGO3. In terms of tissue distribution, highest level in cerebellum, retina, liver, and lung. Lower levels in cerebrum, kidney, small intestine, spleen and testis.

It localises to the cell membrane. The protein localises to the nucleus. Required for depolarization-dependent survival of cultured cerebellar granule neurons. May mediate homophilic as well as heterophilic cell-cell interaction with AMIGO1 or AMIGO3. May contribute to signal transduction through its intracellular domain. In Mus musculus (Mouse), this protein is Amphoterin-induced protein 2.